The following is a 340-amino-acid chain: Methionine import ATP-binding protein MetN 2 (340 aa).

An ABC transporter domain is found at 5–244; that stretch reads VRFESVTKTF…PQAPASKSFV (240 aa). 41-48 provides a ligand contact to ATP; it reads GYSGAGKS.

This sequence belongs to the ABC transporter superfamily. Methionine importer (TC 3.A.1.24) family. The complex is composed of two ATP-binding proteins (MetN), two transmembrane proteins (MetI) and a solute-binding protein (MetQ).

The protein resides in the cell membrane. The catalysed reaction is L-methionine(out) + ATP + H2O = L-methionine(in) + ADP + phosphate + H(+). It carries out the reaction D-methionine(out) + ATP + H2O = D-methionine(in) + ADP + phosphate + H(+). In terms of biological role, part of the ABC transporter complex MetNIQ involved in methionine import. Responsible for energy coupling to the transport system. The chain is Methionine import ATP-binding protein MetN 2 from Rhodococcus jostii (strain RHA1).